Reading from the N-terminus, the 72-residue chain is Gas vesicle protein A (72 aa).

It belongs to the gas vesicle GvpA family. In terms of assembly, the gas vesicle shell is 2 nm thick and consists of a single layer of this protein. It forms helical ribs nearly perpendicular to the long axis of the vesicle.

The protein localises to the gas vesicle shell. In terms of biological role, gas vesicles are hollow, gas filled proteinaceous nanostructures found in some microorganisms. During planktonic growth they allow positioning of the organism at a favorable depth for light or nutrient acquisition. GvpA forms the protein shell. In Geotalea uraniireducens (strain Rf4) (Geobacter uraniireducens), this protein is Gas vesicle protein A.